The primary structure comprises 848 residues: Coiled-coil domain-containing protein 110 (848 aa).

The segment at 41–62 is disordered; the sequence is SEGVKESGGNEPEYGCASEPEN. Residues 442-794 are a coiled coil; it reads LQNYLKESLQ…LSDKVSSQNN (353 aa). Phosphoserine is present on Ser620.

The protein resides in the nucleus. The sequence is that of Coiled-coil domain-containing protein 110 (Ccdc110) from Mus musculus (Mouse).